A 212-amino-acid chain; its full sequence is Ribosomal RNA large subunit methyltransferase E (212 aa).

The S-adenosyl-L-methionine site is built by Gly57, Trp59, Asp77, Asp93, and Asp122. Catalysis depends on Lys162, which acts as the Proton acceptor.

Belongs to the class I-like SAM-binding methyltransferase superfamily. RNA methyltransferase RlmE family.

Its subcellular location is the cytoplasm. The catalysed reaction is uridine(2552) in 23S rRNA + S-adenosyl-L-methionine = 2'-O-methyluridine(2552) in 23S rRNA + S-adenosyl-L-homocysteine + H(+). Specifically methylates the uridine in position 2552 of 23S rRNA at the 2'-O position of the ribose in the fully assembled 50S ribosomal subunit. This is Ribosomal RNA large subunit methyltransferase E from Coxiella burnetii (strain RSA 331 / Henzerling II).